The sequence spans 159 residues: Cyclic pyranopterin monophosphate synthase (159 aa).

Substrate-binding positions include 76 to 78 (MCH) and 114 to 115 (ME). Asp-129 is a catalytic residue.

The protein belongs to the MoaC family. Homohexamer; trimer of dimers.

It catalyses the reaction (8S)-3',8-cyclo-7,8-dihydroguanosine 5'-triphosphate = cyclic pyranopterin phosphate + diphosphate. Its pathway is cofactor biosynthesis; molybdopterin biosynthesis. Catalyzes the conversion of (8S)-3',8-cyclo-7,8-dihydroguanosine 5'-triphosphate to cyclic pyranopterin monophosphate (cPMP). This chain is Cyclic pyranopterin monophosphate synthase, found in Natranaerobius thermophilus (strain ATCC BAA-1301 / DSM 18059 / JW/NM-WN-LF).